A 207-amino-acid polypeptide reads, in one-letter code: Putative tributyltin chloride resistance protein (207 aa).

Positions 37–122 (NLPIELALMP…YHAIAALNLG (86 aa)) are slt-type domain. The active site involves Glu-49.

It belongs to the transglycosylase Slt family.

This chain is Putative tributyltin chloride resistance protein (tbtA), found in Alteromonas sp. (strain M-1).